A 70-amino-acid chain; its full sequence is Conotoxin ArMKLT2-0112 (70 aa).

A signal peptide spans 1-22 (MKLTCVLIIAVLFLTACQLTTG). Residues 23-40 (EQKDHALRSTDKNSKLTR) constitute a propeptide that is removed on maturation. A Pyrrolidone carboxylic acid modification is found at Gln41. 3 cysteine pairs are disulfide-bonded: Cys42/Cys56, Cys49/Cys60, and Cys55/Cys67.

This sequence belongs to the conotoxin O1 superfamily. In terms of tissue distribution, expressed by the venom duct.

The protein resides in the secreted. The sequence is that of Conotoxin ArMKLT2-0112 from Conus arenatus (Sand-dusted cone).